Reading from the N-terminus, the 282-residue chain is Major surface antigen 4 (282 aa).

An N-terminal signal peptide occupies residues 1–29 (MNYRELFTGGLSAATVCACSLLVSGAVVA).

This sequence belongs to the surface antigen msp4 family.

This is Major surface antigen 4 (msp4) from Anaplasma marginale.